A 612-amino-acid chain; its full sequence is Dihydroxy-acid dehydratase (612 aa).

Asp81 is a binding site for Mg(2+). Cys122 provides a ligand contact to [2Fe-2S] cluster. Mg(2+) contacts are provided by Asp123 and Lys124. Residue Lys124 is modified to N6-carboxylysine. [2Fe-2S] cluster is bound at residue Cys193. A Mg(2+)-binding site is contributed by Glu489. Catalysis depends on Ser515, which acts as the Proton acceptor.

This sequence belongs to the IlvD/Edd family. As to quaternary structure, homodimer. [2Fe-2S] cluster is required as a cofactor. The cofactor is Mg(2+).

The catalysed reaction is (2R)-2,3-dihydroxy-3-methylbutanoate = 3-methyl-2-oxobutanoate + H2O. The enzyme catalyses (2R,3R)-2,3-dihydroxy-3-methylpentanoate = (S)-3-methyl-2-oxopentanoate + H2O. It participates in amino-acid biosynthesis; L-isoleucine biosynthesis; L-isoleucine from 2-oxobutanoate: step 3/4. The protein operates within amino-acid biosynthesis; L-valine biosynthesis; L-valine from pyruvate: step 3/4. Its function is as follows. Functions in the biosynthesis of branched-chain amino acids. Catalyzes the dehydration of (2R,3R)-2,3-dihydroxy-3-methylpentanoate (2,3-dihydroxy-3-methylvalerate) into 2-oxo-3-methylpentanoate (2-oxo-3-methylvalerate) and of (2R)-2,3-dihydroxy-3-methylbutanoate (2,3-dihydroxyisovalerate) into 2-oxo-3-methylbutanoate (2-oxoisovalerate), the penultimate precursor to L-isoleucine and L-valine, respectively. The polypeptide is Dihydroxy-acid dehydratase (Xanthomonas oryzae pv. oryzae (strain MAFF 311018)).